The chain runs to 448 residues: NADH oxidase (448 aa).

FAD is bound by residues 7–11 (GSGAA), cysteine 42, valine 80, 110–113 (ATGA), and arginine 132. Cysteine 42 (redox-active) is an active-site residue. NAD(+)-binding positions include 152–167 (VAVV…MAYG), glutamate 179, and glycine 243. FAD contacts are provided by residues 271-281 (TSIPNIYAVGD), glycine 299, and threonine 300. NAD(+) is bound at residue valine 328. Residue tyrosine 423 coordinates FAD.

It belongs to the class-III pyridine nucleotide-disulfide oxidoreductase family. FAD is required as a cofactor.

The enzyme catalyses 2 NADH + O2 + 2 H(+) = 2 NAD(+) + 2 H2O. Functionally, catalyzes the four-electron reduction of molecular oxygen to water. This is NADH oxidase from Methanocaldococcus jannaschii (strain ATCC 43067 / DSM 2661 / JAL-1 / JCM 10045 / NBRC 100440) (Methanococcus jannaschii).